A 50-amino-acid polypeptide reads, in one-letter code: Protein hunchback (50 aa).

3 consecutive C2H2-type zinc fingers follow at residues histidine 1–histidine 5, isoleucine 11–histidine 33, and tyrosine 39–tyrosine 50.

Belongs to the hunchback C2H2-type zinc-finger protein family.

The protein localises to the nucleus. In terms of biological role, gap class segmentation protein that controls development of head structures. The chain is Protein hunchback (hb) from Bradysia coprophila (Dark-winged fungus gnat).